The following is a 371-amino-acid chain: Cytochrome b (371 aa).

4 helical membrane passes run 25-45 (FGSM…FLAI), 69-90 (WIMQ…YIHI), 105-125 (WLSG…GYVL), and 170-190 (FCAL…IHII). The heme b site is built by H75 and H89. Residues H174 and H188 each coordinate heme b. Residue H193 coordinates a ubiquinone. 4 helical membrane-spanning segments follow: residues 218 to 238 (YKDF…LSVS), 280 to 300 (LGGT…PFTH), 312 to 332 (LSQT…WTAT), and 339 to 358 (FITI…IMNP).

It belongs to the cytochrome b family. The cytochrome bc1 complex contains 3 respiratory subunits (MT-CYB, CYC1 and UQCRFS1), 2 core proteins (UQCRC1 and UQCRC2) and probably 6 low-molecular weight proteins. Requires heme b as cofactor.

The protein localises to the mitochondrion inner membrane. Functionally, component of the ubiquinol-cytochrome c reductase complex (complex III or cytochrome b-c1 complex) that is part of the mitochondrial respiratory chain. The b-c1 complex mediates electron transfer from ubiquinol to cytochrome c. Contributes to the generation of a proton gradient across the mitochondrial membrane that is then used for ATP synthesis. This is Cytochrome b (MT-CYB) from Micrurus tener microgalbineus (Spotted coral snake).